A 630-amino-acid chain; its full sequence is DNA mismatch repair protein MutL (630 aa).

Positions 398 to 408 (TQTNAFGSMAT) are enriched in polar residues. The tract at residues 398–425 (TQTNAFGSMATSRDSSRGSYSASESRQR) is disordered.

This sequence belongs to the DNA mismatch repair MutL/HexB family.

This protein is involved in the repair of mismatches in DNA. It is required for dam-dependent methyl-directed DNA mismatch repair. May act as a 'molecular matchmaker', a protein that promotes the formation of a stable complex between two or more DNA-binding proteins in an ATP-dependent manner without itself being part of a final effector complex. This is DNA mismatch repair protein MutL from Shewanella baltica (strain OS185).